A 538-amino-acid chain; its full sequence is Putative cysteine ligase BshC (538 aa).

Residues 419–445 adopt a coiled-coil conformation; that stretch reads IEAKRQIQAMEQLLAEKYSELASYLEE.

Belongs to the BshC family.

Functionally, involved in bacillithiol (BSH) biosynthesis. May catalyze the last step of the pathway, the addition of cysteine to glucosamine malate (GlcN-Mal) to generate BSH. This is Putative cysteine ligase BshC from Lysinibacillus sphaericus (strain C3-41).